The primary structure comprises 212 residues: Cytidylate kinase (212 aa).

Gly-7–Thr-15 contributes to the ATP binding site.

The protein belongs to the cytidylate kinase family. Type 1 subfamily.

The protein localises to the cytoplasm. It carries out the reaction CMP + ATP = CDP + ADP. It catalyses the reaction dCMP + ATP = dCDP + ADP. The sequence is that of Cytidylate kinase from Nitrobacter winogradskyi (strain ATCC 25391 / DSM 10237 / CIP 104748 / NCIMB 11846 / Nb-255).